The following is a 475-amino-acid chain: Sulfate adenylyltransferase subunit 1 (475 aa).

The tr-type G domain occupies 25-239; sequence KSLLRFLTCG…EVLETVEIQR (215 aa). Positions 34–41 are G1; it reads GSVDDGKS. A GTP-binding site is contributed by 34–41; sequence GSVDDGKS. The segment at 92–96 is G2; it reads GITID. Positions 113 to 116 are G3; it reads DTPG. GTP is bound by residues 113–117 and 168–171; these read DTPGH and NKMD. The tract at residues 168 to 171 is G4; that stretch reads NKMD. The tract at residues 206 to 208 is G5; sequence SAL.

This sequence belongs to the TRAFAC class translation factor GTPase superfamily. Classic translation factor GTPase family. CysN/NodQ subfamily. Heterodimer composed of CysD, the smaller subunit, and CysN.

The enzyme catalyses sulfate + ATP + H(+) = adenosine 5'-phosphosulfate + diphosphate. The protein operates within sulfur metabolism; hydrogen sulfide biosynthesis; sulfite from sulfate: step 1/3. Functionally, with CysD forms the ATP sulfurylase (ATPS) that catalyzes the adenylation of sulfate producing adenosine 5'-phosphosulfate (APS) and diphosphate, the first enzymatic step in sulfur assimilation pathway. APS synthesis involves the formation of a high-energy phosphoric-sulfuric acid anhydride bond driven by GTP hydrolysis by CysN coupled to ATP hydrolysis by CysD. The sequence is that of Sulfate adenylyltransferase subunit 1 from Shigella flexneri serotype 5b (strain 8401).